We begin with the raw amino-acid sequence, 767 residues long: Protein transport protein Sec23A (767 aa).

4 residues coordinate Zn(2+): C61, C66, C85, and C88. A Gelsolin-like repeat occupies 634 to 720 (PEPVLLDSSS…EHGGSQARFL (87 aa)).

The protein belongs to the SEC23/SEC24 family. SEC23 subfamily. In terms of assembly, COPII is composed of at least five proteins: the Sec23/24 complex, the Sec13/31 complex and Sar1.

Its subcellular location is the cytoplasmic vesicle. It localises to the COPII-coated vesicle membrane. The protein resides in the endoplasmic reticulum membrane. It is found in the cytoplasm. The protein localises to the cytosol. Component of the coat protein complex II (COPII) which promotes the formation of transport vesicles from the endoplasmic reticulum (ER). The coat has two main functions, the physical deformation of the endoplasmic reticulum membrane into vesicles and the selection of cargo molecules for their transport to the Golgi complex. The chain is Protein transport protein Sec23A from Gallus gallus (Chicken).